We begin with the raw amino-acid sequence, 428 residues long: Arginine biosynthesis bifunctional protein ArgJ, mitochondrial (428 aa).

6 residues coordinate substrate: T171, K197, T208, E294, N423, and S428. T208 (nucleophile) is an active-site residue.

It belongs to the ArgJ family. Heterodimer of an alpha and a beta chain. The alpha and beta chains are autoproteolytically processed from a single precursor protein within the mitochondrion.

The protein localises to the mitochondrion matrix. The enzyme catalyses N(2)-acetyl-L-ornithine + L-glutamate = N-acetyl-L-glutamate + L-ornithine. It carries out the reaction L-glutamate + acetyl-CoA = N-acetyl-L-glutamate + CoA + H(+). It participates in amino-acid biosynthesis; L-arginine biosynthesis; L-ornithine and N-acetyl-L-glutamate from L-glutamate and N(2)-acetyl-L-ornithine (cyclic): step 1/1. The protein operates within amino-acid biosynthesis; L-arginine biosynthesis; N(2)-acetyl-L-ornithine from L-glutamate: step 1/4. Its function is as follows. Catalyzes two activities which are involved in the cyclic version of arginine biosynthesis: the synthesis of acetylglutamate from glutamate and acetyl-CoA, and of ornithine by transacetylation between acetylornithine and glutamate. In Komagataella phaffii (strain GS115 / ATCC 20864) (Yeast), this protein is Arginine biosynthesis bifunctional protein ArgJ, mitochondrial.